The primary structure comprises 124 residues: Small ribosomal subunit protein bS6 (124 aa).

The interval 96–124 (ETGPSPMMKEVQREEAKKAAAAQPAEAQA) is disordered. Positions 114-124 (AAAAQPAEAQA) are enriched in low complexity.

This sequence belongs to the bacterial ribosomal protein bS6 family.

Binds together with bS18 to 16S ribosomal RNA. In Burkholderia orbicola (strain MC0-3), this protein is Small ribosomal subunit protein bS6.